The primary structure comprises 380 residues: Homoserine O-acetyltransferase (380 aa).

Residues 70–366 (NAVLVFHALT…SPHGHDAFLI (297 aa)) form the AB hydrolase-1 domain. Residue Ser186 is the Nucleophile of the active site. Arg250 contributes to the substrate binding site. Catalysis depends on residues Asp333 and His361. Asp362 lines the substrate pocket.

Belongs to the AB hydrolase superfamily. MetX family. As to quaternary structure, homodimer.

Its subcellular location is the cytoplasm. The enzyme catalyses L-homoserine + acetyl-CoA = O-acetyl-L-homoserine + CoA. Its pathway is amino-acid biosynthesis; L-methionine biosynthesis via de novo pathway; O-acetyl-L-homoserine from L-homoserine: step 1/1. In terms of biological role, transfers an acetyl group from acetyl-CoA to L-homoserine, forming acetyl-L-homoserine. The sequence is that of Homoserine O-acetyltransferase from Thermus thermophilus (strain ATCC 27634 / DSM 579 / HB8).